A 339-amino-acid polypeptide reads, in one-letter code: MSYSAPSQITQRQLAYFEGKHVLIAGELIDDFPFELAKHCESTSIFTTNYSYYKQFAGHNSIQCYFGSELTEPTNVDMILLYWPKAKAEAEYLLTMLLAKLGKNTEIVVVGENRSGVKSIEKMFADFGPINKFDSARRCSFYWGQCTEEAPTFNQQDWFKEYQVEFENHTIEVRSLPGVFSHGEFDKGSELLLQTLPALRGHVLDFGCGAGVIGSVMKTINPKIHLDMVDISALAIASSIETLKANNLEGNVFASDVYSDTKENYQFIVSNPPFHAGLKTHYSSTEELLEKAPQNLTHEGQLILVANSFLQYPPIIEKAFGECLTLAKNNKFKIYSAQK.

Belongs to the methyltransferase superfamily. RsmC family. In terms of assembly, monomer.

The protein resides in the cytoplasm. It carries out the reaction guanosine(1207) in 16S rRNA + S-adenosyl-L-methionine = N(2)-methylguanosine(1207) in 16S rRNA + S-adenosyl-L-homocysteine + H(+). In terms of biological role, specifically methylates the guanine in position 1207 of 16S rRNA in the 30S particle. This is Ribosomal RNA small subunit methyltransferase C from Aliivibrio fischeri (strain ATCC 700601 / ES114) (Vibrio fischeri).